We begin with the raw amino-acid sequence, 257 residues long: Putative hydro-lyase Bcep18194_B2576 (257 aa).

Belongs to the D-glutamate cyclase family.

The polypeptide is Putative hydro-lyase Bcep18194_B2576 (Burkholderia lata (strain ATCC 17760 / DSM 23089 / LMG 22485 / NCIMB 9086 / R18194 / 383)).